The primary structure comprises 468 residues: Glutamate--tRNA ligase (468 aa).

Residues 9–19 (PSPTGSIHIGN) carry the 'HIGH' region motif. The 'KMSKS' region signature appears at 239-243 (KLSKR). Residue lysine 242 participates in ATP binding.

The protein belongs to the class-I aminoacyl-tRNA synthetase family. Glutamate--tRNA ligase type 1 subfamily. Monomer.

It localises to the cytoplasm. It catalyses the reaction tRNA(Glu) + L-glutamate + ATP = L-glutamyl-tRNA(Glu) + AMP + diphosphate. In terms of biological role, catalyzes the attachment of glutamate to tRNA(Glu) in a two-step reaction: glutamate is first activated by ATP to form Glu-AMP and then transferred to the acceptor end of tRNA(Glu). This is Glutamate--tRNA ligase from Blochmanniella pennsylvanica (strain BPEN).